The chain runs to 225 residues: UPF0758 protein SEQ_1136 (225 aa).

An MPN domain is found at 102–224 (PVLSSAQVAE…YYSFREKSDL (123 aa)). Zn(2+) contacts are provided by histidine 173, histidine 175, and aspartate 186. The JAMM motif signature appears at 173–186 (HNHPSGLTKPSAND).

It belongs to the UPF0758 family.

The chain is UPF0758 protein SEQ_1136 from Streptococcus equi subsp. equi (strain 4047).